Here is a 141-residue protein sequence, read N- to C-terminus: Hemoglobin subunit alpha (141 aa).

Residues 1–141 (VLSEEDKSHV…VSAMLTSKYR (141 aa)) enclose the Globin domain. His-58 is a binding site for O2. His-87 serves as a coordination point for heme b.

The protein belongs to the globin family. As to quaternary structure, heterotetramer of two alpha chains and two beta chains. In terms of tissue distribution, red blood cells.

Functionally, involved in oxygen transport from the lung to the various peripheral tissues. The chain is Hemoglobin subunit alpha (HBA) from Caiman crocodilus (Spectacled caiman).